A 114-amino-acid polypeptide reads, in one-letter code: Nucleoid-associated protein Tlet_0999 (114 aa).

The protein belongs to the YbaB/EbfC family. In terms of assembly, homodimer.

The protein resides in the cytoplasm. The protein localises to the nucleoid. Functionally, binds to DNA and alters its conformation. May be involved in regulation of gene expression, nucleoid organization and DNA protection. The protein is Nucleoid-associated protein Tlet_0999 of Pseudothermotoga lettingae (strain ATCC BAA-301 / DSM 14385 / NBRC 107922 / TMO) (Thermotoga lettingae).